Here is a 257-residue protein sequence, read N- to C-terminus: Global transcriptional regulator CodY (257 aa).

The segment at 1–155 is GAF domain; the sequence is MSLLSKTREL…AATVIGMEIL (155 aa). The GTP site is built by Val-22, Phe-24, Ser-43, Arg-44, Arg-45, and Lys-47. The L-isoleucine site is built by Arg-61, Thr-96, and Phe-98. Positions 153 and 158 each coordinate GTP. A DNA-binding region (H-T-H motif) is located at residues 203-222; the sequence is ASKVADRVGITRSVIVNALR.

This sequence belongs to the CodY family. Homodimer. Homotetramer. May form homodimers under conditions in which energy sources are sufficient (active state) and homotetramers under insufficient nutrient conditions (inactive state).

It is found in the cytoplasm. Its activity is regulated as follows. Activity of CodY is modulated by interaction with two types of effectors: the branched-chain amino acids (BCAAs) leucine, isoleucine and valine, which are signals of the nutritional status of the cell, and GTP, which may signal the energetic status of the cell. Its function is as follows. DNA-binding global transcriptional regulator which is involved in the adaptive response to starvation and acts by directly or indirectly controlling the expression of numerous genes in response to nutrient availability. During rapid exponential growth, CodY is highly active and represses genes whose products allow adaptation to nutrient depletion. This chain is Global transcriptional regulator CodY, found in Staphylococcus aureus (strain Mu3 / ATCC 700698).